Reading from the N-terminus, the 414-residue chain is WD repeat-containing protein jip5 (414 aa).

WD repeat units lie at residues 9-48, 73-112, 118-159, 222-263, and 319-356; these read PLSA…SDTD, RHKG…VENK, AKDG…SPVS, VSSV…DQDE, and DETE…DGMD. Residues 39-65 form a disordered region; the sequence is RLPSEESDTDGDGAESTSSSRNGKGHI. The tract at residues 352-414 is disordered; the sequence is SDGMDGDMAG…QDIMGFADID (63 aa). Over residues 369–383 the composition is skewed to acidic residues; sequence DSDDSDDGDDSDDSD.

This sequence belongs to the WD repeat WDR55 family.

The protein localises to the nucleus. Its subcellular location is the nucleolus. The chain is WD repeat-containing protein jip5 (jip5) from Neosartorya fischeri (strain ATCC 1020 / DSM 3700 / CBS 544.65 / FGSC A1164 / JCM 1740 / NRRL 181 / WB 181) (Aspergillus fischerianus).